The chain runs to 210 residues: Urease accessory protein UreE (210 aa).

The tract at residues 144–210 (PEGGAYAAGG…GHAHPHSLAR (67 aa)) is disordered. Basic and acidic residues predominate over residues 156–202 (HGHDHPHHDHGHDHAHAHAHGTEACDHEHSHDHDCGHHHDHGQDYGH).

Belongs to the UreE family.

The protein localises to the cytoplasm. Its function is as follows. Involved in urease metallocenter assembly. Binds nickel. Probably functions as a nickel donor during metallocenter assembly. The polypeptide is Urease accessory protein UreE (Paracidovorax citrulli (strain AAC00-1) (Acidovorax citrulli)).